The following is a 100-amino-acid chain: Apolipoprotein C-II (100 aa).

A signal peptide spans 1–25; the sequence is MDARSLLLLWLLLPLLLLLGCEVQG. Residues 65–73 are lipid binding; that stretch reads AVDETIRDI. A lipoprotein lipase cofactor region spans residues 77 to 100; the sequence is GSAAISTYTGILTDQILTMLQGKQ.

The protein belongs to the apolipoprotein C2 family. Post-translationally, proapolipoprotein C-II is synthesized as a sialic acid containing glycoprotein which is subsequently desialylated prior to its proteolytic processing. Proapolipoprotein C-II, the major form found in plasma undergoes proteolytic cleavage of its N-terminal hexapeptide to generate apolipoprotein C-II, which occurs as the minor form in plasma. In terms of tissue distribution, liver.

The protein resides in the secreted. Functionally, component of chylomicrons, very low-density lipoproteins (VLDL), low-density lipoproteins (LDL), and high-density lipoproteins (HDL) in plasma. Plays an important role in lipoprotein metabolism as an activator of lipoprotein lipase. Both proapolipoprotein C-II and apolipoprotein C-II can activate lipoprotein lipase. The chain is Apolipoprotein C-II (APOC2) from Cavia porcellus (Guinea pig).